The chain runs to 306 residues: Deoxyribokinase (306 aa).

Substrate-binding positions include 10–12 (MVD), 38–42 (GKGAN), and Glu139. ATP is bound by residues Asn184 and 220–225 (TMGEKG). K(+) is bound by residues Asp246 and Ser248. Position 251–252 (251–252 (GD)) interacts with ATP. Asp252 contacts substrate. Asp252 (proton acceptor) is an active-site residue. Residues Ser282, Gly285, Gly287, and Ser291 each contribute to the K(+) site.

Belongs to the carbohydrate kinase PfkB family. Deoxyribokinase subfamily. In terms of assembly, homodimer. Mg(2+) serves as cofactor.

It is found in the cytoplasm. It carries out the reaction 2-deoxy-D-ribose + ATP = 2-deoxy-D-ribose 5-phosphate + ADP + H(+). Catalyzes the ATP-dependent phosphorylation of 2-deoxy-D-ribose to 2-deoxy-D-ribose 5-phosphate (dRib-5P), allowing the use of deoxyribose as the sole carbon source. Can also use D-ribose, with much lower efficiency. The polypeptide is Deoxyribokinase (Salmonella typhi).